A 55-amino-acid polypeptide reads, in one-letter code: UPF0391 membrane protein Tbd_2772 (55 aa).

2 helical membrane passes run 1–21 and 28–48; these read MFGW…FGFA and AWIA…MLVM.

This sequence belongs to the UPF0391 family.

It localises to the cell membrane. The chain is UPF0391 membrane protein Tbd_2772 from Thiobacillus denitrificans (strain ATCC 25259 / T1).